A 268-amino-acid polypeptide reads, in one-letter code: Ribonuclease P protein subunit p30 (268 aa).

Residue Ala2 is modified to N-acetylalanine. The tract at residues 247-268 (KPRPSEGDEDCLPASKKAKCEG) is disordered. Ser251 bears the Phosphoserine mark.

This sequence belongs to the eukaryotic/archaeal RNase P protein component 3 family. Component of nuclear RNase P and RNase MRP ribonucleoproteins. RNase P consists of a catalytic RNA moiety and about 10 protein subunits; POP1, POP4, POP5, POP7, RPP14, RPP21, RPP25, RPP30, RPP38 and RPP40. Within the RNase P complex, POP1, POP7 and RPP25 form the 'finger' subcomplex, POP5, RPP14, RPP40 and homodimeric RPP30 form the 'palm' subcomplex, and RPP21, POP4 and RPP38 form the 'wrist' subcomplex. All subunits of the RNase P complex interact with the catalytic RNA. Several subunits of RNase P are also part of the RNase MRP complex. RNase MRP consists of a catalytic RNA moiety and about 8 protein subunits; POP1, POP7, RPP25, RPP30, RPP38, RPP40 and possibly also POP4 and POP5.

It localises to the nucleus. The protein localises to the nucleolus. Functionally, component of ribonuclease P, a ribonucleoprotein complex that generates mature tRNA molecules by cleaving their 5'-ends. Also a component of the MRP ribonuclease complex, which cleaves pre-rRNA sequences. In Homo sapiens (Human), this protein is Ribonuclease P protein subunit p30 (RPP30).